The following is a 286-amino-acid chain: Beta-lactamase SHV-5 (286 aa).

The N-terminal stretch at 1-21 (MRYIRLCIISLLATLPLAVHA) is a signal peptide. Serine 66 serves as the catalytic Acyl-ester intermediate. Cysteine 73 and cysteine 119 form a disulfide bridge. Glutamate 164 acts as the Proton acceptor in catalysis. 230 to 232 (KTG) lines the substrate pocket.

It belongs to the class-A beta-lactamase family.

The enzyme catalyses a beta-lactam + H2O = a substituted beta-amino acid. SHV enzymes hydrolyze broad spectrum cephalosporins notably cefotaxime and ceftazidime. SHV-5 causes particularly high levels of resistance to aztreonam and ceftazidime. The chain is Beta-lactamase SHV-5 (bla) from Klebsiella pneumoniae.